Reading from the N-terminus, the 165-residue chain is Large ribosomal subunit protein uL10 (165 aa).

Belongs to the universal ribosomal protein uL10 family. Part of the ribosomal stalk of the 50S ribosomal subunit. The N-terminus interacts with L11 and the large rRNA to form the base of the stalk. The C-terminus forms an elongated spine to which L12 dimers bind in a sequential fashion forming a multimeric L10(L12)X complex.

Its function is as follows. Forms part of the ribosomal stalk, playing a central role in the interaction of the ribosome with GTP-bound translation factors. This Buchnera aphidicola subsp. Schizaphis graminum (strain Sg) protein is Large ribosomal subunit protein uL10.